Reading from the N-terminus, the 150-residue chain is MSLQFNSVALLLVALILLGIFSQNSAVTISAAVLLIMQQTLLSKYVPYLEQYGIKIGIIILTIGVLAPLVSGRIALPELVQLINWKMIVAIIAGIVVAWLGGRGVTLMGNQPVLVTGLLIGTIIGVAFLKGVPVGPLIAAGILSLIIGKS.

A run of 5 helical transmembrane segments spans residues 1–21, 27–46, 52–72, 82–102, and 123–143; these read MSLQFNSVALLLVALILLGIF, VTISAAVLLIMQQTLLSKYV, YGIKIGIIILTIGVLAPLVSG, LINWKMIVAIIAGIVVAWLGG, and IIGVAFLKGVPVGPLIAAGIL.

The protein belongs to the UPF0756 family.

The protein resides in the cell membrane. This chain is UPF0756 membrane protein HAPS_1649, found in Glaesserella parasuis serovar 5 (strain SH0165) (Haemophilus parasuis).